A 992-amino-acid chain; its full sequence is UvrABC system protein A (992 aa).

Over residues 1–11 the composition is skewed to polar residues; the sequence is MPKNSSTTVSS. The tract at residues 1-30 is disordered; the sequence is MPKNSSTTVSSAVEAHAGGLASGPGGARSG. 62 to 69 provides a ligand contact to ATP; sequence GLSGSGKS. The C4-type; atypical zinc-finger motif lies at 302 to 330; sequence CPNGHEQTVDEIEPRSFSFNNPFGACPEC. 2 consecutive ABC transporter domains span residues 360 to 639 and 659 to 988; these read WSLG…TRSV and PEKG…RFLA. ATP is bound at residue 692-699; that stretch reads GVSGSGKS. The C4-type zinc finger occupies 791 to 817; the sequence is CEACAGDGTLKIEMNFLPDVYVPCEVC.

This sequence belongs to the ABC transporter superfamily. UvrA family. In terms of assembly, forms a heterotetramer with UvrB during the search for lesions.

It localises to the cytoplasm. Functionally, the UvrABC repair system catalyzes the recognition and processing of DNA lesions. UvrA is an ATPase and a DNA-binding protein. A damage recognition complex composed of 2 UvrA and 2 UvrB subunits scans DNA for abnormalities. When the presence of a lesion has been verified by UvrB, the UvrA molecules dissociate. The chain is UvrABC system protein A from Micrococcus luteus (Micrococcus lysodeikticus).